The following is a 101-amino-acid chain: Ribonuclease P protein component 1 (101 aa).

Belongs to the eukaryotic/archaeal RNase P protein component 1 family. As to quaternary structure, consists of a catalytic RNA component and at least 4-5 protein subunits.

It localises to the cytoplasm. It catalyses the reaction Endonucleolytic cleavage of RNA, removing 5'-extranucleotides from tRNA precursor.. Functionally, part of ribonuclease P, a protein complex that generates mature tRNA molecules by cleaving their 5'-ends. The protein is Ribonuclease P protein component 1 of Methanococcoides burtonii (strain DSM 6242 / NBRC 107633 / OCM 468 / ACE-M).